Reading from the N-terminus, the 2593-residue chain is Citrinin polyketide synthase (2593 aa).

The N-terminal acylcarrier protein transacylase domain (SAT) stretch occupies residues 70-224 (KLLENLNAWI…YVSVIVDQRR (155 aa)). The active-site Nucleophile; for transacylase activity is Cys-139. Residue His-258 is the Proton donor/acceptor; for transacylase activity of the active site. The Ketosynthase family 3 (KS3) domain occupies 391-806 (DERIAVIGMA…GSNASMVVTQ (416 aa)). Active-site for beta-ketoacyl synthase activity residues include Cys-555, His-690, and His-729. The segment at 906–1191 (PDPKPVILCF…VAIWLEAGSN (286 aa)) is malonyl-CoA:ACP transacylase (MAT) domain. Positions 1291-1424 (PKGLTTFVGY…GTITFQAADS (134 aa)) are N-terminal hotdog fold. One can recognise a PKS/mFAS DH domain in the interval 1291–1603 (PKGLTTFVGY…YQKVSISGIR (313 aa)). A product template (PT) domain region spans residues 1322 to 1601 (LLSGHIMANA…ISYQKVSISG (280 aa)). The Proton acceptor; for dehydratase activity role is filled by His-1326. Residues 1451–1603 (VADDILQGRN…YQKVSISGIR (153 aa)) are C-terminal hotdog fold. Residue Asp-1508 is the Proton donor; for dehydratase activity of the active site. Residues 1636–1662 (VADSPLVDGSSTAVSGTPPTKKAPKAP) form a disordered region. Residues 1661–1738 (APSVDITGKM…SLVECMQRIL (78 aa)) form the Carrier domain. O-(pantetheine 4'-phosphoryl)serine is present on Ser-1689. Catalysis depends on for methyltransferase activity residues Tyr-1955, His-2067, and Glu-2093. A methyltransferase (CMeT) domain region spans residues 1960–2134 (INAVWIQQAE…ATHWKKILTS (175 aa)). The segment at 2215–2459 (PAPTGHCVLV…KALPDFDGSL (245 aa)) is NADPH-binding (R) domain.

Requires pantetheine 4'-phosphate as cofactor.

It participates in mycotoxin biosynthesis. Non-reducing polyketide synthase; part of the gene cluster that mediates the biosynthesis of the mycotoxin citrinin, a hepato-nephrotoxic compound to humans due to inhibition of respiration complex III. The pathway begins with the synthesis of a keto-aldehyde intermediate by the citrinin PKS (pksCT) from successive condensations of 4 malonyl-CoA units, presumably with a simple acetyl-CoA starter unit. Release of the keto-aldehyde intermediate is consistent with the presence of the C-terminal reductive release domain. Mp11 collaborates with pksCT by catalyzing the hydrolysis of ACP-bound acyl intermediates to free the ACP from stalled intermediates. Mpl2 then catalyzes the oxidation of the C-12 methyl of the ketone intermediate to an alcohol intermediate which is further oxidized by the oxidoreductase mpl7 to produce a bisaldehyde intermediate. The fourth catalytic step is catalyzed by the mpl4 aldehyde dehydrogenase. The final transformation is the reduction of C-3 by mpl6 to provide the chemically stable citrinin nucleus. This chain is Citrinin polyketide synthase, found in Monascus purpureus (Red mold).